A 98-amino-acid polypeptide reads, in one-letter code: Small ribosomal subunit protein bS20 (98 aa).

It belongs to the bacterial ribosomal protein bS20 family.

Functionally, binds directly to 16S ribosomal RNA. The chain is Small ribosomal subunit protein bS20 from Parasynechococcus marenigrum (strain WH8102).